Reading from the N-terminus, the 717-residue chain is MLNQRKPVEQMTEAEAAEELAFLAAELSRHDMLYHGKDDPEISDADYDALKRRNDLIEERFPALIREDSPSQKVGAAPSLTFAPVVHARPMLSLDNSFSDEDARAFVAGIYRFLGRLPDGSIAFTVEPKIDGLSMSLRYENRRLVTAATRGDGTTGENVTANVRTIGMIPQRLPAEAPDVVEIRGEIYMAKSDFAALNAEMAAQGRPLYVNPRNTASGSLRQLDAKVTASRRLRFFAYAWGEMSAMPADTQLGMVETFKAWGFPVNPLMQRFFSADELLEHYHHIERERPELDYDIDGVVYKVDQLDLQARLGFRSRSPRWATAHKFPAERAFTRLKGIDIQVGRTGALTPVARLEPITVGGVVVTNATLHNEDYIRGIGNTGEPIREGRDIRIGDMVIVQRAGDVIPQIVDVVMDERPEGTEPYRFPTSCPICGSHAVRDINEKTGKVDAVRRCTGGFVCRAQAVEHLKHFVSRNAFDIEGLGSKQIEFFFESEDETLRIRTAPDIFTLERRQESSLTKLENIDGFGKVSVRKLYEAINARRSIGLHRFIYALGIRHVGETTAKLLARSYGTYEHFGAAMTEAGGFSGDAWNELNSIDGIGEVVARAIVEFYKEPRNLKVLSDLLEEVTPERAEMPVATDSPVAGKTVVFTGSLEKMTRDEAKAKAESLGAKVAGSVSKKTDIVVAGPGAGSKLDKARELGLQTMDEDEWLALIGG.

NAD(+) is bound by residues 44 to 48, 93 to 94, and Glu127; these read DADYD and SL. The active-site N6-AMP-lysine intermediate is Lys129. NAD(+) is bound by residues Arg150, Glu186, Lys302, and Lys326. Cys431, Cys434, Cys455, and Cys461 together coordinate Zn(2+). Residues 639–717 enclose the BRCT domain; that stretch reads ATDSPVAGKT…EDEWLALIGG (79 aa).

It belongs to the NAD-dependent DNA ligase family. LigA subfamily. Requires Mg(2+) as cofactor. Mn(2+) serves as cofactor.

It carries out the reaction NAD(+) + (deoxyribonucleotide)n-3'-hydroxyl + 5'-phospho-(deoxyribonucleotide)m = (deoxyribonucleotide)n+m + AMP + beta-nicotinamide D-nucleotide.. Its function is as follows. DNA ligase that catalyzes the formation of phosphodiester linkages between 5'-phosphoryl and 3'-hydroxyl groups in double-stranded DNA using NAD as a coenzyme and as the energy source for the reaction. It is essential for DNA replication and repair of damaged DNA. This chain is DNA ligase, found in Sinorhizobium medicae (strain WSM419) (Ensifer medicae).